The following is a 432-amino-acid chain: Probable protein phosphatase 2C 75 (432 aa).

The 313-residue stretch at 44 to 356 folds into the PPM-type phosphatase domain; sequence VACLFTRQGK…DDCAVVCLFL (313 aa). The Mn(2+) site is built by Asp80, Gly81, Asp301, and Asp347. Positions 372–408 are disordered; it reads SPRMPALSGITRPNSKRVTPDDVDDGSDSNVSGDERS.

It belongs to the PP2C family. Mg(2+) is required as a cofactor. Requires Mn(2+) as cofactor.

It catalyses the reaction O-phospho-L-seryl-[protein] + H2O = L-seryl-[protein] + phosphate. The catalysed reaction is O-phospho-L-threonyl-[protein] + H2O = L-threonyl-[protein] + phosphate. The chain is Probable protein phosphatase 2C 75 from Oryza sativa subsp. japonica (Rice).